We begin with the raw amino-acid sequence, 676 residues long: Protein cereblon (676 aa).

Acidic residues predominate over residues 1 to 11 (MDDEETAEIDE). Disordered regions lie at residues 1–78 (MDDE…TTAH), 118–194 (EDAG…AVPR), and 249–276 (DDAN…LDVD). 2 stretches are compositionally biased toward low complexity: residues 12–33 (TSSS…TETA) and 125–139 (VPQN…TPPA). Residues 156–177 (LVNNDSPSQASISSRHSGSDMS) show a composition bias toward polar residues. One can recognise a Lon N-terminal domain in the interval 314-542 (RMLIFMHQHI…IIGTTLKHES (229 aa)). A CULT domain is found at 541–650 (ESLFYCRYCN…LAGSSVRIGK (110 aa)). Cys546, Cys549, Cys615, and Cys618 together coordinate Zn(2+).

It belongs to the CRBN family. Likely a component of a DCX (DDB1-CUL4-X-box) protein ligase complex. May interact with pic/DDB1. Ubiquitinated.

The protein localises to the nucleus. The protein operates within protein modification; protein ubiquitination. Its function is as follows. Substrate recognition component of a DCX (DDB1-CUL4-X-box) E3 protein ligase complex that mediates the ubiquitination and subsequent proteasomal degradation of target proteins. Has an essential role in mediating growth by negatively regulating insulin signaling. It also has a role in maintaining presynaptic function in the neuromuscular junction synapses of third-instar larvae. This is Protein cereblon from Drosophila mojavensis (Fruit fly).